The chain runs to 779 residues: MMEDNKQLALRIDGAVQSASQEVTNLRAELTATNRRLAELSGGGGGPGSGPGAATSASAAAVTVADSAVATMENHQHGAQVLLREEVVQLQEEVHLLRQMKEMLAKDLEESQGGKCSEVLSATELRVQLVQKEQELARAKEALQAMKADRKRLKGEKTDLVSQMQQLYATLESREEQLRDFIRNYEQHRKESEDAVKALAKEKDLLEREKWELRRQAKEATDHAAALRSQLDLKDNRMKELEAELAMAKQSLATLTKDVPKRHSLAMPGETVLNGNQEWVVQADLPLTAAIRQSQQTLYHSHPPHPADRQVRVSPCHSRQPSVISDASAAEGDRSSTPSDINSPRHRTHSLCNGDSPGPVQKSLHNPIVQSLEDLEDQKRKKKKEKMGFGSISRVFARGKQRKSLDPGLFDDSDSQCSPTRHSLSLSEGEEQMDRLQHVELVRTTPMSHWKAGTVQAWLEVVMAMPMYVKACAENVKSGKVLLSLSDEDLELGLGVCSSLHRRKLRLAIEDYRDAEAGRSLSKAADLDHHWVAKAWLNDIGLSQYSQAFQNHLVDGRMLNSLMKRDLEKHLNVSKKFHQVSILLGIELLYQVNFSREALQERRARCETQNTDPVVWTNQRVLKWVRDIDLKEYADNLTNSGVHGAVLVLEPTFNAEAMATALGIPSGKHILRRHLAEEMSTIFHPSNSTGIRESERFGTPPGRASSITRAGREDSGGNSKHRAGRLPLGKIGRGFSSKEPDFHDDYGSLENEDCGDEDLQGRPEQCRLEGYGSLEVTNV.

Positions 79-261 form a coiled coil; the sequence is AQVLLREEVV…LATLTKDVPK (183 aa). Positions 295–366 are disordered; it reads QQTLYHSHPP…PGPVQKSLHN (72 aa). A phosphoserine mark is found at serine 356, serine 371, and serine 391. The tract at residues 403–429 is disordered; the sequence is KSLDPGLFDDSDSQCSPTRHSLSLSEG. Residues 415–426 are compositionally biased toward polar residues; it reads SQCSPTRHSLSL. 3 SAM domains span residues 450-515, 528-592, and 616-683; these read WKAG…YRDA, DHHW…LYQV, and WTNQ…STIF. The disordered stretch occupies residues 685–779; sequence PSNSTGIRES…GYGSLEVTNV (95 aa). Residues 736-746 show a composition bias toward basic and acidic residues; that stretch reads SSKEPDFHDDY.

It belongs to the kazrin family. As to expression, expressed in skin interfollicular epidermis and hair follicles. Expressed in tongue epithelium basal suprabasal layers.

It localises to the cell junction. It is found in the nucleus. Its subcellular location is the cytoplasm. The protein resides in the cytoskeleton. Its function is as follows. Component of the cornified envelope of keratinocytes. May be involved in the interplay between adherens junctions and desmosomes. The function in the nucleus is not known. This Mus musculus (Mouse) protein is Kazrin (Kazn).